The sequence spans 287 residues: uncharacterized protein (287 aa).

Helical transmembrane passes span 4–24, 36–56, 66–86, 93–113, 122–142, 148–168, 179–199, 208–228, 237–259, and 264–286; these read TTNGWINGFIGVLIFSGSLPA, FLTVCRAAIAGVLAGGLLLIF, LISLLVVAFGVVIGFPLLTAL, SAHAIVFIGLLPLATAVFGVL, VFWIFSAAGSLLVAGFALIQG, LGDAYMLASIVVCGLGYAEGA, VISWALVLSLPLMLPLSFFFT, VPALLSLAYVSLFSMLIGFVF, GIAAVGQLQLLQPFFGLLLASVI, and VGWALVAVNIAVIMCVAAARRFA. EamA domains are found at residues 16-139 and 158-284; these read LIFS…GFAL and VVCG…AARR.

This sequence belongs to the EamA transporter family.

The protein localises to the cell membrane. This is an uncharacterized protein from Bacillus subtilis (strain 168).